The following is a 287-amino-acid chain: ATP synthase gamma chain (287 aa).

It belongs to the ATPase gamma chain family. F-type ATPases have 2 components, CF(1) - the catalytic core - and CF(0) - the membrane proton channel. CF(1) has five subunits: alpha(3), beta(3), gamma(1), delta(1), epsilon(1). CF(0) has three main subunits: a, b and c.

It localises to the cell inner membrane. In terms of biological role, produces ATP from ADP in the presence of a proton gradient across the membrane. The gamma chain is believed to be important in regulating ATPase activity and the flow of protons through the CF(0) complex. The chain is ATP synthase gamma chain from Xylella fastidiosa (strain 9a5c).